A 486-amino-acid polypeptide reads, in one-letter code: Glutamate--tRNA ligase (486 aa).

A 'HIGH' region motif is present at residues 11 to 21 (PSPTGFLHIGG). 4 residues coordinate Zn(2+): Cys-108, Cys-110, Cys-136, and His-138. The 'KMSKS' region signature appears at 253-257 (KLSKR). Lys-256 lines the ATP pocket.

Belongs to the class-I aminoacyl-tRNA synthetase family. Glutamate--tRNA ligase type 1 subfamily. As to quaternary structure, monomer. Zn(2+) is required as a cofactor.

It is found in the cytoplasm. It carries out the reaction tRNA(Glu) + L-glutamate + ATP = L-glutamyl-tRNA(Glu) + AMP + diphosphate. In terms of biological role, catalyzes the attachment of glutamate to tRNA(Glu) in a two-step reaction: glutamate is first activated by ATP to form Glu-AMP and then transferred to the acceptor end of tRNA(Glu). This Lysinibacillus sphaericus (strain C3-41) protein is Glutamate--tRNA ligase.